A 1146-amino-acid chain; its full sequence is Cell division cycle and apoptosis regulator protein 1 (1146 aa).

The interaction with AR stretch occupies residues Met-1 to Gln-246. An interaction with GATA2 region spans residues Gln-200–Ser-657. Positions Ile-282–Arg-351 are disordered. Basic and acidic residues-rich tracts occupy residues Arg-290–Pro-331 and Glu-338–Pro-349. Ser-453 carries the post-translational modification Phosphoserine. Residues Lys-591 to Asp-615 are a coiled coil. The segment at Gln-599–Ala-635 is disordered. A compositionally biased stretch (acidic residues) spans Glu-608–Glu-618. A Phosphothreonine modification is found at Thr-624. Positions Pro-633–Leu-667 constitute an SAP domain. Lys-634 participates in a covalent cross-link: Glycyl lysine isopeptide (Lys-Gly) (interchain with G-Cter in ubiquitin). The interaction with GATA1 stretch occupies residues Asp-640–Val-1146. Position 664 is a phosphothreonine (Thr-664). Composition is skewed to basic and acidic residues over residues Glu-671 to Lys-684, Asp-691 to Arg-716, Lys-793 to Glu-814, and Ser-829 to Ser-852. 2 disordered regions span residues Glu-671–Arg-716 and Lys-793–Pro-912. A phosphoserine mark is found at Ser-682 and Ser-694. Over residues Lys-853–Glu-884 the composition is skewed to acidic residues. Thr-858 is modified (phosphothreonine). A compositionally biased stretch (basic and acidic residues) spans Glu-885–Pro-912. Residue Lys-1008 forms a Glycyl lysine isopeptide (Lys-Gly) (interchain with G-Cter in SUMO1); alternate linkage. Lys-1008 participates in a covalent cross-link: Glycyl lysine isopeptide (Lys-Gly) (interchain with G-Cter in SUMO2); alternate. Residues Asp-1029–Thr-1110 are a coiled coil. Glycyl lysine isopeptide (Lys-Gly) (interchain with G-Cter in SUMO2) cross-links involve residues Lys-1063 and Lys-1131.

In terms of assembly, directly interacts with ESR1, NR3C1 and p53/TP53. Interacts (via N-terminus) with CALCOCO1. Interacts with MED1 and GATA1. Interacts with AR and GATA2.

The protein localises to the cytoplasm. It localises to the perinuclear region. Functionally, associates with components of the Mediator and p160 coactivator complexes that play a role as intermediaries transducing regulatory signals from upstream transcriptional activator proteins to basal transcription machinery at the core promoter. Recruited to endogenous nuclear receptor target genes in response to the appropriate hormone. Also functions as a p53 coactivator. May thus play an important role in transcriptional regulation. May be involved in apoptosis signaling in the presence of the retinoid CD437. Apoptosis induction involves sequestration of 14-3-3 protein(s) and mediated altered expression of multiple cell cycle regulatory genes including MYC, CCNB1 and CDKN1A. Plays a role in cell cycle progression and/or cell proliferation. In association with CALCOCO1 enhances GATA1- and MED1-mediated transcriptional activation from the gamma-globin promoter during erythroid differentiation of K562 erythroleukemia cells. Can act as a both a coactivator and corepressor of AR-mediated transcription. Contributes to chromatin looping and AR transcription complex assembly by stabilizing AR-GATA2 association on chromatin and facilitating MED1 and RNA polymerase II recruitment to AR-binding sites. May play an important role in the growth and tumorigenesis of prostate cancer cells. The sequence is that of Cell division cycle and apoptosis regulator protein 1 (Ccar1) from Mus musculus (Mouse).